We begin with the raw amino-acid sequence, 1703 residues long: Pecanex-like protein 1 (1703 aa).

Helical transmembrane passes span 31–53 (VNALHLYIWLFLLCFPFTLYMAL) and 57–74 (MVIVGIYCGVIAAMFLLL). Residues 91 to 100 (VEHQTRESKG) are compositionally biased toward basic and acidic residues. The tract at residues 91-126 (VEHQTRESKGSRGGTGGANDPVTRREDSNGLGDPGG) is disordered. N-linked (GlcNAc...) asparagine glycosylation is present at asparagine 256. Helical transmembrane passes span 416 to 438 (VLAVVLAVLVAFLGSVLLIHGFF), 477 to 499 (AYSRPVYFCLCCGLIWLLHYGSL), and 525 to 547 (LVIVFTLCFPIIFFVGLLPQVNT). Residue asparagine 564 is glycosylated (N-linked (GlcNAc...) asparagine). Transmembrane regions (helical) follow at residues 569–591 (LLSALYSILRSIVTVALLYCFCY), 603–622 (IPVLFSVFCGLLVAVSYHLS), 675–697 (LIVCVVIAVLYFAIHVSTVFIAL), and 704–721 (VLYGLLGAVGLLTHYLLP). N-linked (GlcNAc...) asparagine glycans are attached at residues asparagine 988, asparagine 1129, and asparagine 1391. Disordered stretches follow at residues 1475–1556 (VQSG…HSIP) and 1577–1598 (TDPLSQHHHPHHHPQQHNPTHA). 2 stretches are compositionally biased toward low complexity: residues 1485 to 1510 (ARASVVSQSSSYRYSSSRHSSLRTST) and 1518 to 1556 (RSSTSQLSLRTLPTSLQLRLGSTSDPAGPSSSLSSHSIP). Over residues 1582–1591 (QHHHPHHHPQ) the composition is skewed to basic residues. The N-linked (GlcNAc...) asparagine glycan is linked to asparagine 1622.

This sequence belongs to the pecanex family.

Its subcellular location is the membrane. The protein is Pecanex-like protein 1 of Takifugu rubripes (Japanese pufferfish).